Here is a 363-residue protein sequence, read N- to C-terminus: Type-2 angiotensin II receptor (363 aa).

The Extracellular segment spans residues Met-1–Asp-45. Asn-4, Asn-13, Asn-24, Asn-29, and Asn-34 each carry an N-linked (GlcNAc...) asparagine glycan. Intrachain disulfides connect Cys-35-Cys-290 and Cys-117-Cys-195. Residues Ala-46–Cys-70 traverse the membrane as a helical segment. The Cytoplasmic segment spans residues Cys-71 to Ser-80. Residues Ile-81–Tyr-104 traverse the membrane as a helical segment. Positions 103 and 104 each coordinate angiotensin II. Residues Ser-105 to Pro-114 are Extracellular-facing. The chain crosses the membrane as a helical span at residues Val-115–Val-140. At Asp-141–Gln-159 the chain is on the cytoplasmic side. A helical transmembrane segment spans residues Ala-160–Phe-181. Arg-182, Tyr-204, and Lys-215 together coordinate angiotensin II. At Arg-182 to Gln-206 the chain is on the extracellular side. Residues Trp-207–Phe-232 form a helical membrane-spanning segment. At Gly-233 to Met-257 the chain is on the cytoplasmic side. Residues Ala-258–Leu-281 form a helical membrane-spanning segment. Asp-279 contributes to the angiotensin II binding site. Residues Ala-282–Ala-294 are Extracellular-facing. Residues Val-295–Phe-320 form a helical membrane-spanning segment. Angiotensin II is bound at residue Asp-297. Residues Val-321–Ser-363 lie on the Cytoplasmic side of the membrane. The segment at Arg-324–Phe-333 is helix VIII.

Belongs to the G-protein coupled receptor 1 family. In terms of assembly, interacts with MTUS1. As to expression, in adult, highly expressed in myometrium with lower levels in adrenal gland and fallopian tube. Expressed in the cerebellum. Very highly expressed in fetal kidney and intestine.

It localises to the cell membrane. In terms of biological role, receptor for angiotensin II, a vasoconstricting peptide. Signals primarily via a non-canonical G-protein- and beta-arrestin independent pathways. Cooperates with MTUS1 to inhibit ERK2 activation and cell proliferation. The polypeptide is Type-2 angiotensin II receptor (Homo sapiens (Human)).